The chain runs to 171 residues: Transcriptional repressor NrdR (171 aa).

Positions 1–10 (MQCPHCHHNG) are enriched in basic residues. The segment at 1–21 (MQCPHCHHNGSRVVDSRPTDD) is disordered. The segment at 3 to 34 (CPHCHHNGSRVVDSRPTDDGRVIRRRRECENC) is a zinc-finger region. One can recognise an ATP-cone domain in the interval 49–139 (LLVIKKNGAR…VYRQFKDMHV (91 aa)). The tract at residues 152-171 (KVKLAKPSAKTTHAPKRKKD) is disordered.

It belongs to the NrdR family. Zn(2+) is required as a cofactor.

Its function is as follows. Negatively regulates transcription of bacterial ribonucleotide reductase nrd genes and operons by binding to NrdR-boxes. The polypeptide is Transcriptional repressor NrdR (Lactiplantibacillus plantarum (strain ATCC BAA-793 / NCIMB 8826 / WCFS1) (Lactobacillus plantarum)).